A 119-amino-acid polypeptide reads, in one-letter code: Host cell factor C1 regulator 1 (119 aa).

Residues 1–34 (MILQQPLERGPQGRAQRDPRAASGASGGLDAREP) are disordered. Residues 57–60 (DHPY) are interaction with HCFC1. Positions 91–100 (IPEALRLLRL) match the Nuclear export signal motif.

As to quaternary structure, interacts with HCFC1.

The protein resides in the cytoplasm. The protein localises to the nucleus. Regulates HCFC1 activity by modulating its subcellular localization. Overexpression of HCFC1R1 leads to accumulation of HCFC1 in the cytoplasm. HCFC1R1-mediated export may provide the pool of cytoplasmic HCFC1 required for import of virion-derived VP16 into the nucleus. This Bos taurus (Bovine) protein is Host cell factor C1 regulator 1 (HCFC1R1).